A 192-amino-acid polypeptide reads, in one-letter code: UPF0149 protein KPK_0755 (192 aa).

The protein belongs to the UPF0149 family.

The sequence is that of UPF0149 protein KPK_0755 from Klebsiella pneumoniae (strain 342).